We begin with the raw amino-acid sequence, 381 residues long: GDP-mannose transporter (381 aa).

The span at 1 to 12 (MSDDKKSDDYRV) shows a compositional bias: basic and acidic residues. The disordered stretch occupies residues 1-28 (MSDDKKSDDYRVDMPSSRTSRAPSPIMR). Residues 1 to 36 (MSDDKKSDDYRVDMPSSRTSRAPSPIMRPALKSAPS) are Cytoplasmic-facing. A helical transmembrane segment spans residues 37–57 (LTENPMAAVLAYCASSILMTV). At 58–67 (TNKYVLSGVD) the chain is on the lumenal side. The helical transmembrane segment at 68-88 (FNLNFFLLCVQSVVCVTAISI) threads the bilayer. Topologically, residues 89–107 (CKAAGLITYRDFNTDEAKK) are cytoplasmic. Residues 108-126 (WFPISLLLIGMIYTGTWAL) form a helical membrane-spanning segment. The Lumenal portion of the chain corresponds to 127–130 (KYLS). Residues 131-153 (IPVYTIFKNLTIILIAYGEVLWF) form a helical membrane-spanning segment. The Cytoplasmic portion of the chain corresponds to 154–161 (GGSVTPMT). A helical transmembrane segment spans residues 162–184 (LFSFGLMVLSSIIAAWADIQHAL). Residues 185-199 (NSFGQQSEAANEALS) lie on the Lumenal side of the membrane. A helical membrane pass occupies residues 200 to 220 (TMHAGYLWMAFNCVCSATYLL). At 221–242 (SMRKRIKLTNFKDYDTMYYNNL) the chain is on the cytoplasmic side. A helical membrane pass occupies residues 243 to 263 (LTIPILLVASILVEDWSSANI). At 264–274 (QKNFPPEQRNT) the chain is on the lumenal side. The chain crosses the membrane as a helical span at residues 275–295 (VIMVMVISGMSTVFISYTSAW). Over 296–303 (AVRVTSST) the chain is Cytoplasmic. The helical transmembrane segment at 304–324 (TYSMVGALNKLPIAISGLVFF) threads the bilayer. Residues 325–327 (DAP) lie on the Lumenal side of the membrane. A helical transmembrane segment spans residues 328–348 (VTFGSVSAIFVGFVSGIVYAV). Topologically, residues 349–381 (AKVRQNSKPKTVLPTTNIPLSASSRSMQDSLKA) are cytoplasmic.

This sequence belongs to the TPT transporter family. SLC35D subfamily. As to quaternary structure, homooligomer.

The protein localises to the golgi apparatus membrane. The protein resides in the cytoplasmic vesicle membrane. It is found in the endoplasmic reticulum membrane. Its function is as follows. Involved in the import of GDP-mannose from the cytoplasm into the Golgi lumen. This is GDP-mannose transporter (VRG4) from Phaeosphaeria nodorum (strain SN15 / ATCC MYA-4574 / FGSC 10173) (Glume blotch fungus).